The primary structure comprises 745 residues: Elongation factor G, mitochondrial (745 aa).

One can recognise a tr-type G domain in the interval 40 to 317 (ERIRNIGISA…AVLDYLPNPG (278 aa)). Residues 49–56 (AHIDSGKT), 116–120 (DTPGH), and 170–173 (NKLD) contribute to the GTP site.

Belongs to the TRAFAC class translation factor GTPase superfamily. Classic translation factor GTPase family. EF-G/EF-2 subfamily.

It localises to the mitochondrion. It functions in the pathway protein biosynthesis; polypeptide chain elongation. Mitochondrial GTPase that catalyzes the GTP-dependent ribosomal translocation step during translation elongation. During this step, the ribosome changes from the pre-translocational (PRE) to the post-translocational (POST) state as the newly formed A-site-bound peptidyl-tRNA and P-site-bound deacylated tRNA move to the P and E sites, respectively. Catalyzes the coordinated movement of the two tRNA molecules, the mRNA and conformational changes in the ribosome. Essential during development as it acts as a retrograde signal from mitochondria to the nucleus to slow down cell proliferation if mitochondrial energy output is low. In Drosophila erecta (Fruit fly), this protein is Elongation factor G, mitochondrial.